Reading from the N-terminus, the 490-residue chain is Tryptophan decarboxylase (490 aa).

Lys-306 is modified (N6-(pyridoxal phosphate)lysine).

This sequence belongs to the group II decarboxylase family. Homodimer. Pyridoxal 5'-phosphate serves as cofactor.

The protein resides in the cytoplasm. The enzyme catalyses L-tryptophan + H(+) = tryptamine + CO2. Inhibited by (S)-alpha-fluoromethyltryptophan. Catalyzes the decarboxylation of tryptophan to tryptamine. Tryptamine is a neurotransmitter that induces the release of serotonin, which is suggested to modulate gastrointestinal motility. Therefore, the tryptophan decarboxylase from the gut bacteria Ruminococcus gnavus (strain ATCC 29149 / VPI C7-9) may influence host brain and behavior. Has weak activity with tyrosine and phenylalanine. This Mediterraneibacter gnavus (strain ATCC 29149 / DSM 114966 / JCM 6515 / VPI C7-9) (Ruminococcus gnavus) protein is Tryptophan decarboxylase.